Reading from the N-terminus, the 319-residue chain is GTP cyclohydrolase MptA (319 aa).

Belongs to the GTP cyclohydrolase IV family. Homodimer. The cofactor is Fe(2+).

It carries out the reaction GTP + H2O = 7,8-dihydroneopterin 2',3'-cyclic phosphate + formate + diphosphate + H(+). Its pathway is cofactor biosynthesis; 5,6,7,8-tetrahydromethanopterin biosynthesis. Its function is as follows. Converts GTP to 7,8-dihydro-D-neopterin 2',3'-cyclic phosphate, the first intermediate in the biosynthesis of coenzyme methanopterin. In Methanosarcina barkeri (strain Fusaro / DSM 804), this protein is GTP cyclohydrolase MptA.